The following is a 542-amino-acid chain: MFAFSKAPAGCSTYERVTQKFQDGSNKLRAAIEMDELTKQNGTINEKLQTAELYKQARQMLKEANEFNIMDIPESKRSEVREKREKTLNLEKSAQDRLIKICNEVDPNMKRASTAADPCRAARITPRNTRATVPGDKKVSKVKQTEKAPHVCSRGDRCGAHQPPPEKKSTPLKPVNQIRTRVKENKNPIGVQQQVFSFILSCCMRRNCRRPHYLFPCMISLKMNYFKFQATLPNQLNTVNRSNLLKGVDKAIGERLLDEILDSTGVRMDDVAGCHSAKATLEEAVILPALNPNLFSGLRQPVKGILLFGPPGNGKTLLAKAVAGESKQMFFNISASSLTSKWVGDSEKTIRGLFQIARNGQPSIIFIDEIDSILCERSEKDAEVSRRMKTEFLVQFDGATSSPDDRILVIGATNRPYELDDAVLRRFPKRIMLNLPDTEARKELITNTLKKHDMMDGLSSSDIRYIASNTSGFSNSDLVALCKEAAMVPVREIHRSKLSVTDGDKIRKIRASDFDTALRTIRPSTSDRILSKLSDFSRNFGC.

Residues 29-66 (RAAIEMDELTKQNGTINEKLQTAELYKQARQMLKEANE) are a coiled coil. The interval 131 to 177 (ATVPGDKKVSKVKQTEKAPHVCSRGDRCGAHQPPPEKKSTPLKPVNQ) is disordered. The span at 135–169 (GDKKVSKVKQTEKAPHVCSRGDRCGAHQPPPEKKS) shows a compositional bias: basic and acidic residues. 309–316 (GPPGNGKT) contacts ATP.

The protein belongs to the AAA ATPase family. Spastin subfamily. As to quaternary structure, homohexamer. The homohexamer is stabilized by ATP-binding. The homohexamer may adopt a ring conformation through which microtubules pass prior to being severed. Interacts with microtubules.

It is found in the cytoplasm. Its subcellular location is the cytoskeleton. The protein localises to the perinuclear region. It carries out the reaction n ATP + n H2O + a microtubule = n ADP + n phosphate + (n+1) alpha/beta tubulin heterodimers.. In terms of biological role, severs microtubules, probably in an ATP-dependent fashion. This is Probable spastin homolog spas-1 (spas-1) from Caenorhabditis briggsae.